A 1073-amino-acid chain; its full sequence is Ring-infected erythrocyte surface antigen (1073 aa).

An N-terminal signal peptide occupies residues 1 to 65 (MRPFHAYSWI…IIGILYIILN (65 aa)). Asn-71 carries N-linked (GlcNAc...) asparagine glycosylation. The segment covering 428 to 444 (DTSEEESVEENEEEHTV) has biased composition (acidic residues). Positions 428-514 (DTSEEESVEE…SDVQQTSEAA (87 aa)) are disordered. The interval 436–504 (EENEEEHTVD…VAEEHVEEPA (69 aa)) is tandem repeats 1. Basic and acidic residues predominate over residues 445 to 456 (DDEHVEEHTADD). Residues 457–470 (EHVEEPTVADDEHV) are compositionally biased toward acidic residues. The span at 476–502 (ADEHVEEPTVAEEHVEEPTVAEEHVEE) shows a compositional bias: basic and acidic residues. The J domain maps to 521-589 (DTLYYDILGV…KRWYNKYGYD (69 aa)). Asn-639, Asn-773, and Asn-777 each carry an N-linked (GlcNAc...) asparagine glycan. The segment at 891 to 1073 (NAEENVEHDA…VEEHNEEYDE (183 aa)) is tandem repeats 2. Residues 894-930 (ENVEHDAEENVEHDAEENVEHDAEENVEHDAEENVEH) are compositionally biased toward basic and acidic residues. The segment at 894–1073 (ENVEHDAEEN…VEEHNEEYDE (180 aa)) is disordered. Positions 931-1073 (DAEENVEENV…VEEHNEEYDE (143 aa)) are enriched in acidic residues.

The Tyr residues in the variant tetrameric sequences in the RESA repeat are possibly phosphorylated (by homology with band 3).

It localises to the cell membrane. Its function is as follows. May disrupt the normal intermolecular interactions of the cytoplasmic domain of band 3 and thereby facilitate the invagination of the red cell membrane which is necessary for the formation of the parasitophorous vacuole. The chain is Ring-infected erythrocyte surface antigen (RESA) from Plasmodium falciparum (isolate FC27 / Papua New Guinea).